Here is a 172-residue protein sequence, read N- to C-terminus: Putative Dresden prostate carcinoma protein 2 (172 aa).

A disordered region spans residues 40-61 (QCEEEEAMTPRPTKARAPLPSA).

Very high expression in prostate and prostate cancer. Faint expression in other tissues.

This chain is Putative Dresden prostate carcinoma protein 2 (HMGN2P46), found in Homo sapiens (Human).